Reading from the N-terminus, the 526-residue chain is MSENIHSHRILILDFGSQYTQLIARRVREIGVYCEIYPFDMSEADIREFNPKGVILAGGPESVTELGSPRAPECLFNMDLPLLGICYGMQTMAEQMGGKVAGSNVREFGYAQVKIERSEDGLFENIKDHVAEDGKPLLDVWMSHGDKVVALPEGFVISASTPSAPIAAMQHESKPWFGVQFHPEVTHTLQGRRMLERFLVNICGCKQLWTPGRIIEDAITQVRNQVGQDKVLLGLSGGVDSSVVAALLHRAIGDQLTCVFVDNGLLRLHEGDQVMDMFAKNMGIKVVRANAQDQFLSKLAGENDPERKRKIIGHTFIEVFDAEAAKIKDVKWLAQGTIYPDVIESAAAKTGKAHVIKSHHNVGGLPEDMEMQLVEPLRELFKDEVRKIGLELGLPYDMVYRHPFPGPGLGVRILGEVKKEYADILREADAIFIEELHRAELYHKVSQAFAVFLPVKSVGVVGDARRYEYVIALRAVETIDFMTARWAHLPYELLEKISNRIINEISGVSRVVYDVSSKPPATIEWE.

The Glutamine amidotransferase type-1 domain occupies 9–208 (RILILDFGSQ…LVNICGCKQL (200 aa)). Catalysis depends on cysteine 86, which acts as the Nucleophile. Residues histidine 182 and glutamate 184 contribute to the active site. In terms of domain architecture, GMPS ATP-PPase spans 209-401 (WTPGRIIEDA…LGLPYDMVYR (193 aa)). 236-242 (SGGVDSS) is a binding site for ATP.

In terms of assembly, homodimer.

It carries out the reaction XMP + L-glutamine + ATP + H2O = GMP + L-glutamate + AMP + diphosphate + 2 H(+). The protein operates within purine metabolism; GMP biosynthesis; GMP from XMP (L-Gln route): step 1/1. In terms of biological role, catalyzes the synthesis of GMP from XMP. The polypeptide is GMP synthase [glutamine-hydrolyzing] (Hahella chejuensis (strain KCTC 2396)).